The primary structure comprises 455 residues: Gamma-glutamyl phosphate reductase (455 aa).

The protein belongs to the gamma-glutamyl phosphate reductase family.

It is found in the cytoplasm. It carries out the reaction L-glutamate 5-semialdehyde + phosphate + NADP(+) = L-glutamyl 5-phosphate + NADPH + H(+). Its pathway is amino-acid biosynthesis; L-proline biosynthesis; L-glutamate 5-semialdehyde from L-glutamate: step 2/2. Functionally, catalyzes the NADPH-dependent reduction of L-glutamate 5-phosphate into L-glutamate 5-semialdehyde and phosphate. The product spontaneously undergoes cyclization to form 1-pyrroline-5-carboxylate. The chain is Gamma-glutamyl phosphate reductase from Synechococcus sp. (strain JA-2-3B'a(2-13)) (Cyanobacteria bacterium Yellowstone B-Prime).